The primary structure comprises 1180 residues: Neurexin like receptor 1 (1180 aa).

An N-terminal signal peptide occupies residues Met1–Gly20. At Glu21 to Lys1108 the chain is on the extracellular side. In terms of domain architecture, Laminin G-like 1 spans Pro124–Cys290. Asn229 carries an N-linked (GlcNAc...) asparagine glycan. Cysteines 267 and 290 form a disulfide. N-linked (GlcNAc...) asparagine glycans are attached at residues Asn302, Asn336, Asn355, and Asn436. An EGF-like 1 domain is found at Phe444 to His481. Cystine bridges form between Cys448–Cys459, Cys453–Cys469, and Cys471–Cys480. N-linked (GlcNAc...) asparagine glycans are attached at residues Asn522 and Asn636. A Laminin G-like 2 domain is found at Thr695–Cys863. In terms of domain architecture, EGF-like 2 spans Asp859–Thr896. 3 disulfides stabilise this stretch: Cys863–Cys874, Cys868–Cys883, and Cys885–Cys895. 6 N-linked (GlcNAc...) asparagine glycosylation sites follow: Asn933, Asn949, Asn978, Asn997, Asn1011, and Asn1052. Residues Ala1109–Ile1129 form a helical membrane-spanning segment. Residues Cys1130–Cys1180 lie on the Cytoplasmic side of the membrane. Polar residues predominate over residues Thr1142–Ser1152. The disordered stretch occupies residues Thr1142–Cys1180. The segment covering Asn1161–Thr1171 has biased composition (low complexity).

Belongs to the neurexin family. As to quaternary structure, interacts (via the intracellular domain) with F-actin; the interaction is required for anchoring F-actin at the membrane for gap junction formation. In terms of tissue distribution, highly expressed in pharyngeal g1 and g2 gland cells, pharyngeal muscle cells and the unilateral GABAergic RIS interneuron (at protein level). Expressed in pm5 pharyngeal muscle cells and the nerve ring.

Its subcellular location is the cell membrane. It is found in the cell junction. The protein localises to the gap junction. Functionally, required for gap junction formation, playing a role in anchoring the cytoskeletal component F-actin to the membrane of adjacent cells and thus facilitating the formation of gap junction channels in embryonic cells, muscle cells and neuronal cells. Plays a role in maintaining gap junction activity to promote pharyngeal muscle contraction. This chain is Neurexin like receptor 1, found in Caenorhabditis elegans.